A 471-amino-acid polypeptide reads, in one-letter code: tRNA(Ile)-lysidine synthase (471 aa).

Residue 35–40 (SGGADS) participates in ATP binding.

It belongs to the tRNA(Ile)-lysidine synthase family.

It localises to the cytoplasm. It carries out the reaction cytidine(34) in tRNA(Ile2) + L-lysine + ATP = lysidine(34) in tRNA(Ile2) + AMP + diphosphate + H(+). Its function is as follows. Ligates lysine onto the cytidine present at position 34 of the AUA codon-specific tRNA(Ile) that contains the anticodon CAU, in an ATP-dependent manner. Cytidine is converted to lysidine, thus changing the amino acid specificity of the tRNA from methionine to isoleucine. This Geobacter sulfurreducens (strain ATCC 51573 / DSM 12127 / PCA) protein is tRNA(Ile)-lysidine synthase.